The following is a 1073-amino-acid chain: MLGDGKEGTSTIPGFNQIQFEGFYRFIDQGLIEEVSKFPKIEDIDQEIEFQLFVETYQLVEPLRKERDAVYESLTYSSELYVSAGLIWKTSRKMQEQRIFIGNIPLMNSLGTSIVNGIYRIVINQILQSPGIYYQSELDHNGISVYTGTIISDWGGRLELEIDKKARIWARVSRKQKISILVLSSAMGSNLREILENVCYPEIFLSFLTDKEKKKIGSKENAILEFYQQFSCVGGDPIFSESLCKELQKKFFHQRCELGRIGRRNINWRLNLTIPQNNIFLLPRDILAAADHLIGMKFGMGTLDDMNHLKNKRIRSVADLLQDQFGLALARLENVVKGTICGAIKHKLIPTPQNLVTATPLTTTYESFFGLHPLSQVLDRTNPLTQIVHGRKLSYLGPGGLTGRTANFRIRDIHPSHYGRICPIDTSEGINVGLIGSLAIHARIGDWGSLESPFYELFEKSKKARIRMLFLSPSQDEYYMIAAGNSLALNRGIQEEQAVPARYRQEFLTIAWEEVHLRSIFPFQYFSIGASLIPFIEHNDANRALMSSNMQRQAVPLSRSEKCIVGTGLERQVALDSGVPAIAEQEGKILYTDTKKIILSGNGDNTLGIPLIMYQRSNKNTCMHQKSQVRRGKCIKKGQILADGAATVGGELALGKNILVAYMPWEGYNFEDAVLISECLVYGDIYTSFHIRKYEIQTHVTTQGPERITKEIPHLEGHLLRNLDKNGIVMLGSWVETGDILVGKLTPQVAKESSYAPEDRLLRAILGIQVSTSKETCLKLPIGGRGRVIDVGWVQKKGGSSYNPEKIRVYISQKREIKVGDKVAGRHGNKGIISKILPRQDMPYLQDGRPVDMVFNPLGVPSRMNVGQIFECSLGLAGSLLDRHYRIAPFDERYEQEASRKLVFSELYEASKQTANPWVFEPEYPGKSRIFDGRTGDPFEQPVIIGKPYILKLIHQVDDKIHGRSSGHYALVTQQPLRGRSKQGGQRVGEMEVWALEGFGVAHILQEMLTYKSDHIRARQEVLGTTIVGGTIPKPEDAPESFRLLVRELRSLALDLNHFLVSEKNFQINRKEV.

This sequence belongs to the RNA polymerase beta chain family. As to quaternary structure, in plastids the minimal PEP RNA polymerase catalytic core is composed of four subunits: alpha, beta, beta', and beta''. When a (nuclear-encoded) sigma factor is associated with the core the holoenzyme is formed, which can initiate transcription.

It is found in the plastid. Its subcellular location is the chloroplast. It catalyses the reaction RNA(n) + a ribonucleoside 5'-triphosphate = RNA(n+1) + diphosphate. In terms of biological role, DNA-dependent RNA polymerase catalyzes the transcription of DNA into RNA using the four ribonucleoside triphosphates as substrates. The polypeptide is DNA-directed RNA polymerase subunit beta (Aethionema grandiflorum (Persian stone-cress)).